The following is a 706-amino-acid chain: G2/M phase-specific E3 ubiquitin-protein ligase (706 aa).

The C2HC pre-PHD-type zinc finger occupies 11–51; it reads NLACVFCRKHDDCPNKYGEKKTKEKWNLTVHYYCLLMSSGI. The PHD-type 1 zinc-finger motif lies at 79 to 128; the sequence is LKCCVCKKNGASIGCVAPRCKRSYHFPCGLQRECIFQFTGNFASFCWDHR. The PHD-type 2; degenerate zinc-finger motif lies at 143 to 193; the sequence is PCTICLEFIEPIPSYNILRSPCCKNAWFHRDCLQVQAINAGVFFFRCTICN. The PHD-type 3 zinc-finger motif lies at 237–286; the sequence is RCRCKEGRDYNAPDSKWEIKRCQCCGSSGTHLACSSLRSWEQNWECLECR. Positions 371 to 698 constitute an HECT domain; sequence IWNSALDAFR…IRNTLRLEKE (328 aa).

Predominantly expressed in brain, liver, kidney, testes and ovary.

It localises to the nucleus. It is found in the nucleolus. Its subcellular location is the cytoplasm. It carries out the reaction S-ubiquitinyl-[E2 ubiquitin-conjugating enzyme]-L-cysteine + [acceptor protein]-L-lysine = [E2 ubiquitin-conjugating enzyme]-L-cysteine + N(6)-ubiquitinyl-[acceptor protein]-L-lysine.. It participates in protein modification; protein ubiquitination. E3 ubiquitin-protein ligase which accepts ubiquitin from an E2 ubiquitin-conjugating enzyme in the form of a thioester and then directly transfers the ubiquitin to targeted substrates. Essential in early embryonic development to prevent apoptotic death. This is G2/M phase-specific E3 ubiquitin-protein ligase (G2E3) from Homo sapiens (Human).